We begin with the raw amino-acid sequence, 196 residues long: Large ribosomal subunit protein uL10 (196 aa).

A disordered region spans residues 167–196 (EKKAAEGPAEAPQPATEPPAEAPEAPADAE).

This sequence belongs to the universal ribosomal protein uL10 family. As to quaternary structure, part of the ribosomal stalk of the 50S ribosomal subunit. The N-terminus interacts with L11 and the large rRNA to form the base of the stalk. The C-terminus forms an elongated spine to which L12 dimers bind in a sequential fashion forming a multimeric L10(L12)X complex.

In terms of biological role, forms part of the ribosomal stalk, playing a central role in the interaction of the ribosome with GTP-bound translation factors. The protein is Large ribosomal subunit protein uL10 of Mycolicibacterium paratuberculosis (strain ATCC BAA-968 / K-10) (Mycobacterium paratuberculosis).